The primary structure comprises 396 residues: Tryptophan synthase beta chain (396 aa).

At lysine 86 the chain carries N6-(pyridoxal phosphate)lysine.

It belongs to the TrpB family. As to quaternary structure, tetramer of two alpha and two beta chains. Requires pyridoxal 5'-phosphate as cofactor.

It catalyses the reaction (1S,2R)-1-C-(indol-3-yl)glycerol 3-phosphate + L-serine = D-glyceraldehyde 3-phosphate + L-tryptophan + H2O. It participates in amino-acid biosynthesis; L-tryptophan biosynthesis; L-tryptophan from chorismate: step 5/5. In terms of biological role, the beta subunit is responsible for the synthesis of L-tryptophan from indole and L-serine. This chain is Tryptophan synthase beta chain, found in Photobacterium profundum (strain SS9).